The following is a 682-amino-acid chain: 1,4-alpha-glucan-branching enzyme (682 aa).

(1,4-alpha-D-glucosyl)n contacts are provided by tryptophan 88 and lysine 124. Catalysis depends on aspartate 342, which acts as the Nucleophile. Glutamate 397 functions as the Proton donor in the catalytic mechanism.

This sequence belongs to the glycosyl hydrolase 13 family. GlgB subfamily.

Its subcellular location is the cytoplasm. The enzyme catalyses Transfers a segment of a (1-&gt;4)-alpha-D-glucan chain to a primary hydroxy group in a similar glucan chain.. It functions in the pathway glycan biosynthesis; glycogen biosynthesis. In terms of biological role, glycogen-branching enzyme participates in the glycogen biosynthetic process along with glycogenin and glycogen synthase. Generates alpha-1,6-glucosidic branches from alpha-1,4-linked glucose chains, to increase solubility of the glycogen polymer. This Cryptococcus neoformans var. grubii serotype A (strain H99 / ATCC 208821 / CBS 10515 / FGSC 9487) (Filobasidiella neoformans var. grubii) protein is 1,4-alpha-glucan-branching enzyme.